We begin with the raw amino-acid sequence, 278 residues long: Probable endonuclease 4 (278 aa).

Zn(2+) is bound by residues H66, H106, E140, D172, H175, H209, D222, H224, and E254.

Belongs to the AP endonuclease 2 family. Requires Zn(2+) as cofactor.

It catalyses the reaction Endonucleolytic cleavage to 5'-phosphooligonucleotide end-products.. In terms of biological role, endonuclease IV plays a role in DNA repair. It cleaves phosphodiester bonds at apurinic or apyrimidinic (AP) sites, generating a 3'-hydroxyl group and a 5'-terminal sugar phosphate. In Haloquadratum walsbyi (strain DSM 16790 / HBSQ001), this protein is Probable endonuclease 4.